The sequence spans 619 residues: ETS-related transcription factor Elf-1 (619 aa).

Phosphoserine is present on residues Ser-110, Ser-163, Ser-167, and Ser-168. Residues 158–199 (EKYADSPGASSPEQPKRKKGRKTKPPRPDSPATTPNISVKKK) form a disordered region. A compositionally biased stretch (basic residues) spans 173–182 (KRKKGRKTKP). Ser-187 is subject to Phosphoserine. The residue at position 190 (Thr-190) is a Phosphothreonine. The segment at residues 208–290 (IYLWEFLLAL…EGQRLVYQFK (83 aa)) is a DNA-binding region (ETS). Residues 300–366 (NDEDPSSSIE…DPVEVAQPSE (67 aa)) are disordered. The segment covering 305 to 321 (SSSIESSDPSLSSSATS) has biased composition (low complexity). The segment covering 322 to 335 (NRNQTSRSRVSSSP) has biased composition (polar residues). A Phosphoserine modification is found at Ser-432. The disordered stretch occupies residues 564–592 (TLTQEVEKKESEDHLKENTEKTEQQPQPY). Residues 568–586 (EVEKKESEDHLKENTEKTE) show a composition bias toward basic and acidic residues.

This sequence belongs to the ETS family. In terms of assembly, binds to the underphosphorylated form of RB. May interact with other transcription factors in order to regulate specific genes. Interacts with RUNX1. In terms of tissue distribution, in fetal tissues, it is highly expressed in heart, lung liver and kidney, and weakly expressed in brain. In adult, it is highly expressed in pancreas, spleen, thymus and peripheral blood leukocytes, expressed at moderate levels in heart, placenta, lung, liver, skeletal muscle, kidney, prostate, ovary, small intestine and colon, and weakly expressed in brain and testis.

It localises to the nucleus. Its function is as follows. Transcription factor that activates the LYN and BLK promoters. Appears to be required for the T-cell-receptor-mediated trans activation of HIV-2 gene expression. Binds specifically to two purine-rich motifs in the HIV-2 enhancer. This Homo sapiens (Human) protein is ETS-related transcription factor Elf-1 (ELF1).